The following is a 324-amino-acid chain: MHGSLLKLALLSFSLASSAAVLPRDTGRTSAPSGCSTVGTSGDYSTIGDALTALGSSTADACIYIAAGTYEEQLVINYAGHLTLYGETTDTQTYKQNTVTITHTISSPEAGSLDNSATVNIKSDLVSVYNINIANGYGSGAQAVALVANADQLGFYACQFTGYQDTLYAKAGHQYYINSRIEGAVDYIFGDASAWFENCDIVSNGAGYITAMSRETTSDTAWYAIDHCNIKAASGVDLTGDVYLGRPWRVLARVIYQYSVLPDIINAKGWHSMADGATPLYYEFNNTGAGSDTSDREYLSTIDAPVAKETVLGDDYKNWVDSSY.

The first 19 residues, 1–19 (MHGSLLKLALLSFSLASSA), serve as a signal peptide directing secretion. Gln142 contributes to the substrate binding site. Asp165 acts as the Proton donor in catalysis. Asp186 serves as the catalytic Nucleophile. 2 residues coordinate substrate: Arg246 and Trp248. Residue Asn285 is glycosylated (N-linked (GlcNAc...) asparagine).

It belongs to the pectinesterase family.

Its subcellular location is the secreted. It catalyses the reaction [(1-&gt;4)-alpha-D-galacturonosyl methyl ester](n) + n H2O = [(1-&gt;4)-alpha-D-galacturonosyl](n) + n methanol + n H(+). It functions in the pathway glycan metabolism; pectin degradation; 2-dehydro-3-deoxy-D-gluconate from pectin: step 1/5. Involved in maceration and soft-rotting of plant tissue. The polypeptide is Probable pectinesterase A (pmeA) (Aspergillus flavus (strain ATCC 200026 / FGSC A1120 / IAM 13836 / NRRL 3357 / JCM 12722 / SRRC 167)).